A 991-amino-acid polypeptide reads, in one-letter code: Adhesion G-protein coupled receptor F3 (991 aa).

Residues 1–20 (MSSLALSQLLLAVTLPLLEL) form the signal peptide. Residues 21–694 (EPTFVPTAQS…ENPTLDLLSQ (674 aa)) lie on the Extracellular side of the membrane. N-linked (GlcNAc...) asparagine glycans are attached at residues Asn-75, Asn-102, Asn-118, Asn-321, Asn-362, Asn-484, Asn-571, Asn-589, Asn-630, and Asn-660. The 166-residue stretch at 519 to 684 (HPFSFSSANV…SILMSQHTVP (166 aa)) folds into the GAIN-B domain. Disulfide bonds link Cys-635/Cys-666 and Cys-654/Cys-668. Residues 635-684 (CVFWDHRVFQGQGGWSDEGCEVHAANASITQCICQHLTAFSILMSQHTVP) form a GPS region. The chain crosses the membrane as a helical span at residues 695 to 715 (VGTGASVLALLVCLAIYGLVW). The Cytoplasmic segment spans residues 716–730 (RVVVRNKVAFFRHTT). The helical transmembrane segment at 731-751 (LFNMVICLLVADTCFLGSPFL) threads the bilayer. Over 752 to 757 (PSGYHS) the chain is Extracellular. The helical transmembrane segment at 758–778 (LICLVTAFLCHFFYLATFFWM) threads the bilayer. Residues 779-799 (LAQALVLAHQLLFVFHQLSKH) are Cytoplasmic-facing. A helical transmembrane segment spans residues 800–820 (VVLSLMVMLGYLCPLGFAGVT). The Extracellular portion of the chain corresponds to 821 to 850 (LGLYLPQRKYLWEGKCFLNGGGVMLYSFSE). A helical membrane pass occupies residues 851-871 (PVLAIVGVNGLVLVIAVLKLL). Residues 872–892 (RPSLSEGPTVEKRQALVGVLK) are Cytoplasmic-facing. The helical transmembrane segment at 893–913 (ALLILTPIFGLTWGLGVATLF) threads the bilayer. Residues 914 to 916 (DGS) are Extracellular-facing. Residues 917–937 (IVSHYAFSILNSLQGVFILVF) form a helical membrane-spanning segment. Topologically, residues 938-991 (GCLTDKKVLEALRKRLRGSRSSNSAISMVTNETYTSEHSKERSEPASYEERMTD) are cytoplasmic. A disordered region spans residues 964-991 (SMVTNETYTSEHSKERSEPASYEERMTD). Over residues 972 to 991 (TSEHSKERSEPASYEERMTD) the composition is skewed to basic and acidic residues.

This sequence belongs to the G-protein coupled receptor 2 family. Adhesion G-protein coupled receptor (ADGR) subfamily. As to quaternary structure, heterodimer of 2 chains generated by proteolytic processing; the large extracellular N-terminal fragment and the membrane-bound C-terminal fragment predominantly remain associated and non-covalently linked. Post-translationally, autoproteolytically processed at the GPS region of the GAIN-B domain; this cleavage modulates receptor activity. In terms of tissue distribution, expression is restricted to testis and circumvallate papillae.

Its subcellular location is the membrane. Its function is as follows. Orphan receptor. This chain is Adhesion G-protein coupled receptor F3 (ADGRF3), found in Mus musculus (Mouse).